Here is a 265-residue protein sequence, read N- to C-terminus: Small ribosomal subunit protein eS1 (265 aa).

The tract at residues 234–256 (EGSTTTSKGVTSEGGEKVDRVDG) is disordered. Residues 247–256 (GGEKVDRVDG) show a composition bias toward basic and acidic residues.

It belongs to the eukaryotic ribosomal protein eS1 family. Component of the small ribosomal subunit. Mature ribosomes consist of a small (40S) and a large (60S) subunit. The 40S subunit contains about 33 different proteins and 1 molecule of RNA (18S). The 60S subunit contains about 49 different proteins and 3 molecules of RNA (28S, 5.8S and 5S).

It is found in the cytoplasm. The chain is Small ribosomal subunit protein eS1 from Aplysia californica (California sea hare).